A 295-amino-acid polypeptide reads, in one-letter code: Ribosomal RNA small subunit methyltransferase A (295 aa).

Asn-29, Leu-31, Gly-56, Glu-77, Asp-102, and Asn-128 together coordinate S-adenosyl-L-methionine.

It belongs to the class I-like SAM-binding methyltransferase superfamily. rRNA adenine N(6)-methyltransferase family. RsmA subfamily.

It localises to the cytoplasm. It carries out the reaction adenosine(1518)/adenosine(1519) in 16S rRNA + 4 S-adenosyl-L-methionine = N(6)-dimethyladenosine(1518)/N(6)-dimethyladenosine(1519) in 16S rRNA + 4 S-adenosyl-L-homocysteine + 4 H(+). Functionally, specifically dimethylates two adjacent adenosines (A1518 and A1519) in the loop of a conserved hairpin near the 3'-end of 16S rRNA in the 30S particle. May play a critical role in biogenesis of 30S subunits. The sequence is that of Ribosomal RNA small subunit methyltransferase A from Listeria welshimeri serovar 6b (strain ATCC 35897 / DSM 20650 / CCUG 15529 / CIP 8149 / NCTC 11857 / SLCC 5334 / V8).